The chain runs to 748 residues: MTISSFLRVRHSLAAAKCVLENAKQSFSSHAAFAEHAKLERIRNIGISAHIDSGKTTLTERILFYTGRIKQMHEVKGKDNVGATMDSMELERQRGITIQSAATYTMWKDHNINIIDTPGHVDFTVEVERALRVLDGAILVLCSVGGVQSQTLTVNRQMKRYNVPCLAFINKLDRTGANPYRVLGQMRSKLNHNAAFIQLPIGVESNCKGIVDLVKQRALYFEDHLGLTVREDEIPQEMRAESDERRHELIEHLSNVDESIGELFLEEKTPTEQDIMAAIRRSALKRTFTPVLVGTALKNKGVQPLLDAVLNYLPHPGEVENIALIEKKGKEPQQIMLDPARDGKSPFVGLAFKLEAGRFGQLTYLRCYQGVLRKGDSIFNVRSGKKVRLARLVRLHSNNMEDVNEVYAGDIFALFGVDCASGDTFVTNPDLELSMESIFVPDPVVSMAIKPANNKDRDNFSKAVARFTKEDPTFRFAYDTDIKETLVSGMGELHLEIYAQRMEREYNCPVILGKPKVAFRETLVAPCEFDFLHKKQSGGQGQYARVTGVLEPLPPHQNTTIEFTDETVGTNVPKQFVPGIEKGFRQMAEKGLLSGHKLSGIKFRLQDGAHHIVDSSELAFMLAAQGAIKSVFENGSWQILEPIMMVEVTAPEEFQGTVIGQLNKRHGIITGTEGSEGWFTVYAEVPLNDMFGYAGELRSSTQGKGEFSMEYSRYSPCKPDVQEKLMQDYQIAQGNVVVDAKKQQKKKN.

The N-terminal 14 residues, 1 to 14, are a transit peptide targeting the mitochondrion; the sequence is MTISSFLRVRHSLA. The tr-type G domain occupies 40–318; sequence ERIRNIGISA…VLNYLPHPGE (279 aa). GTP contacts are provided by residues 49–56, 116–120, and 170–173; these read AHIDSGKT, DTPGH, and NKLD.

This sequence belongs to the TRAFAC class translation factor GTPase superfamily. Classic translation factor GTPase family. EF-G/EF-2 subfamily.

It localises to the mitochondrion. It functions in the pathway protein biosynthesis; polypeptide chain elongation. Functionally, mitochondrial GTPase that catalyzes the GTP-dependent ribosomal translocation step during translation elongation. During this step, the ribosome changes from the pre-translocational (PRE) to the post-translocational (POST) state as the newly formed A-site-bound peptidyl-tRNA and P-site-bound deacylated tRNA move to the P and E sites, respectively. Catalyzes the coordinated movement of the two tRNA molecules, the mRNA and conformational changes in the ribosome. The sequence is that of Elongation factor G, mitochondrial from Aedes aegypti (Yellowfever mosquito).